Here is a 605-residue protein sequence, read N- to C-terminus: Elongation factor 4 (605 aa).

A tr-type G domain is found at 9–192 (HHIRNFCIIA…AIVKRVPAPS (184 aa)). Residues 21–26 (DHGKST) and 139–142 (NKID) contribute to the GTP site.

It belongs to the TRAFAC class translation factor GTPase superfamily. Classic translation factor GTPase family. LepA subfamily.

It is found in the cell inner membrane. The enzyme catalyses GTP + H2O = GDP + phosphate + H(+). Functionally, required for accurate and efficient protein synthesis under certain stress conditions. May act as a fidelity factor of the translation reaction, by catalyzing a one-codon backward translocation of tRNAs on improperly translocated ribosomes. Back-translocation proceeds from a post-translocation (POST) complex to a pre-translocation (PRE) complex, thus giving elongation factor G a second chance to translocate the tRNAs correctly. Binds to ribosomes in a GTP-dependent manner. The sequence is that of Elongation factor 4 from Chlorobium phaeobacteroides (strain DSM 266 / SMG 266 / 2430).